Consider the following 161-residue polypeptide: Protein ilm1 (161 aa).

Residues 1–6 (MLFSFR) are Cytoplasmic-facing. A helical membrane pass occupies residues 7–27 (AIVLFYCCMLTFAGIGFLWNP). At 28-56 (KFVVESGLVALIGASMEVKPLIVTQDNLS) the chain is on the lumenal side. Residues 57 to 77 (TLALSGLVFLILGMIYTISLL) traverse the membrane as a helical segment. Over 78 to 81 (QSNF) the chain is Cytoplasmic. A helical transmembrane segment spans residues 82-102 (LFFSGITPIRAIFDFILTGFI). Topologically, residues 103-112 (YLKKEHIASN) are lumenal. A helical membrane pass occupies residues 113 to 133 (SLTFTFAFCDLMWQFWMFAAM). Residues 134–161 (SEERAKYLKNQKKAEELAARKAREVEES) are Cytoplasmic-facing.

Belongs to the ILM1 family.

The protein resides in the endoplasmic reticulum. Its subcellular location is the membrane. The protein is Protein ilm1 of Schizosaccharomyces pombe (strain 972 / ATCC 24843) (Fission yeast).